A 366-amino-acid polypeptide reads, in one-letter code: Probable quinol oxidase subunit 2 (366 aa).

Positions 1 to 19 are cleaved as a signal peptide; it reads MSKFKSLLLLFGTLILLSG. A lipid anchor (N-palmitoyl cysteine) is attached at Cys20. Cys20 carries S-diacylglycerol cysteine lipidation. 2 helical membrane-spanning segments follow: residues 38-58 and 80-100; these read FLIL…LGMF and AIIE…LAIP. Residues 330-366 form a disordered region; it reads EPYNNEFKKDESKNAKEMKKISKDAQDQDNDDHGGGH. Over residues 335-366 the composition is skewed to basic and acidic residues; the sequence is EFKKDESKNAKEMKKISKDAQDQDNDDHGGGH.

Belongs to the cytochrome c oxidase subunit 2 family.

Its subcellular location is the cell membrane. It catalyses the reaction 2 a quinol + O2 = 2 a quinone + 2 H2O. Functionally, catalyzes quinol oxidation with the concomitant reduction of oxygen to water. Subunit II transfers the electrons from a quinol to the binuclear center of the catalytic subunit I. This is Probable quinol oxidase subunit 2 (qoxA) from Staphylococcus aureus (strain USA300).